The primary structure comprises 475 residues: Eukaryotic translation initiation factor 3 subunit L (475 aa).

In terms of domain architecture, PCI spans 257–451 (DAIRMFSHIL…DLDYAMQGDL (195 aa)).

This sequence belongs to the eIF-3 subunit L family. In terms of assembly, component of the eukaryotic translation initiation factor 3 (eIF-3) complex.

The protein localises to the cytoplasm. In terms of biological role, component of the eukaryotic translation initiation factor 3 (eIF-3) complex, which is involved in protein synthesis of a specialized repertoire of mRNAs and, together with other initiation factors, stimulates binding of mRNA and methionyl-tRNAi to the 40S ribosome. The eIF-3 complex specifically targets and initiates translation of a subset of mRNAs involved in cell proliferation. The protein is Eukaryotic translation initiation factor 3 subunit L of Sclerotinia sclerotiorum (strain ATCC 18683 / 1980 / Ss-1) (White mold).